The following is a 332-amino-acid chain: Biotin synthase (332 aa).

The 230-residue stretch at 53 to 282 (HFGKKVKLNM…TKEIRISGGR (230 aa)) folds into the Radical SAM core domain. Positions 71, 75, and 78 each coordinate [4Fe-4S] cluster. 4 residues coordinate [2Fe-2S] cluster: Cys-115, Cys-147, Cys-207, and Arg-277.

Belongs to the radical SAM superfamily. Biotin synthase family. Homodimer. It depends on [4Fe-4S] cluster as a cofactor. [2Fe-2S] cluster is required as a cofactor.

The catalysed reaction is (4R,5S)-dethiobiotin + (sulfur carrier)-SH + 2 reduced [2Fe-2S]-[ferredoxin] + 2 S-adenosyl-L-methionine = (sulfur carrier)-H + biotin + 2 5'-deoxyadenosine + 2 L-methionine + 2 oxidized [2Fe-2S]-[ferredoxin]. Its pathway is cofactor biosynthesis; biotin biosynthesis; biotin from 7,8-diaminononanoate: step 2/2. In terms of biological role, catalyzes the conversion of dethiobiotin (DTB) to biotin by the insertion of a sulfur atom into dethiobiotin via a radical-based mechanism. The polypeptide is Biotin synthase (Bacillus cereus (strain G9842)).